A 178-amino-acid polypeptide reads, in one-letter code: Interleukin-10 (178 aa).

A signal peptide spans 1 to 18; that stretch reads MHSSALLCCLVLLTGVRA. 2 cysteine pairs are disulfide-bonded: C30–C126 and C80–C132. N-linked (GlcNAc...) asparagine glycosylation occurs at N134.

This sequence belongs to the IL-10 family. In terms of assembly, homodimer. Interacts with IL10RA and IL10RB.

It localises to the secreted. In terms of biological role, major immune regulatory cytokine that acts on many cells of the immune system where it has profound anti-inflammatory functions, limiting excessive tissue disruption caused by inflammation. Mechanistically, IL10 binds to its heterotetrameric receptor comprising IL10RA and IL10RB leading to JAK1 and STAT2-mediated phosphorylation of STAT3. In turn, STAT3 translocates to the nucleus where it drives expression of anti-inflammatory mediators. Targets antigen-presenting cells (APCs) such as macrophages and monocytes and inhibits their release of pro-inflammatory cytokines including granulocyte-macrophage colony-stimulating factor /GM-CSF, granulocyte colony-stimulating factor/G-CSF, IL-1 alpha, IL-1 beta, IL-6, IL-8 and TNF-alpha. Also interferes with antigen presentation by reducing the expression of MHC-class II and co-stimulatory molecules, thereby inhibiting their ability to induce T cell activation. In addition, controls the inflammatory response of macrophages by reprogramming essential metabolic pathways including mTOR signaling. The sequence is that of Interleukin-10 (IL10) from Macaca mulatta (Rhesus macaque).